Consider the following 412-residue polypeptide: Histone-lysine N-methyltransferase SUV39H1 (412 aa).

Residues 1 to 89 (MAENLKGCSV…LKCVRILKQF (89 aa)) form an interaction with SIRT1 region. The Chromo domain maps to 43–101 (FEVEYLCDYKKIREQEYYLVKWRGYPDSESTWEPRQNLKCVRILKQFHKDLERELLRRH). In terms of domain architecture, Pre-SET spans 179 to 240 (VGCECQDCLW…DCPNRVVQKG (62 aa)). Zn(2+) is bound by residues Cys181, Cys183, Cys186, Cys194, Cys195, Cys222, Cys226, Cys228, and Cys232. Positions 243–366 (YDLCIFRTDD…AGEELTFDYN (124 aa)) constitute an SET domain. An S-adenosyl-L-methionine-binding site is contributed by 254-256 (RGW). The mediates interaction with MECOM stretch occupies residues 255–377 (GWGVRTLEKI…QVDPVDMEST (123 aa)). Lys266 bears the N6-acetyllysine mark. S-adenosyl-L-methionine contacts are provided by residues Tyr297 and 323–324 (NH). Zn(2+) is bound at residue Cys326. Ser391 carries the post-translational modification Phosphoserine. Residues 396 to 412 (VRIECKCGTESCRKYLF) enclose the Post-SET domain. 3 residues coordinate Zn(2+): Cys400, Cys402, and Cys407.

It belongs to the class V-like SAM-binding methyltransferase superfamily. Histone-lysine methyltransferase family. Suvar3-9 subfamily. As to quaternary structure, interacts with H3 and H4 histones. Interacts with GFI1B, DNMT3B, CBX1, CBX4, CCAR2, MBD1, RUNX1, RUNX3, MYOD1, SMAD5 and RB1. Interacts with SBF1 through the SET domain. Interacts with HDAC1 and HDAC2 through the N-terminus and associates with the core histone deacetylase complex composed of HDAC1, HDAC2, RBBP4 and RBBP7. Component of the eNoSC complex, composed of SIRT1, SUV39H1 and RRP8. Interacts (via SET domain) with MECOM; enhances MECOM transcriptional repression activity. Interacts with LMNA; the interaction increases stability of SUV39H1. The large PER complex involved in the histone methylation is composed of at least PER2, CBX3, TRIM28, SUV39H1 and/or SUV39H2; CBX3 mediates the formation of the complex. In terms of assembly, (Microbial infection) Interacts with HTLV-1 Tax protein, leading to abrogate Tax transactivation of HTLV-1 LTR. In terms of processing, phosphorylated on serine residues, and to a lesser degree, on threonine residues. The phosphorylated form is stabilized by SBF1 and is less active in its transcriptional repressor function. Post-translationally, ubiquitinated by the DCX(DCAF13) E3 ubiquitin ligase complex, leading to its degradation. Acetylated at Lys-266, leading to inhibition of enzyme activity. SIRT1-mediated deacetylation relieves this inhibition. In terms of processing, (Microbial infection) A higher molecular weight form is also seen in M.bovis infected cells.

It is found in the nucleus. The protein resides in the nucleus lamina. The protein localises to the nucleoplasm. It localises to the chromosome. Its subcellular location is the centromere. It is found in the cytoplasmic vesicle. The protein resides in the phagosome lumen. The protein localises to the cell membrane. It carries out the reaction L-lysyl(9)-[histone H3] + 3 S-adenosyl-L-methionine = N(6),N(6),N(6)-trimethyl-L-lysyl(9)-[histone H3] + 3 S-adenosyl-L-homocysteine + 3 H(+). With respect to regulation, inhibited by S-adenosyl-L-homocysteine. Negatively regulated by CCAR2. Its function is as follows. Histone methyltransferase that specifically trimethylates 'Lys-9' of histone H3 using monomethylated H3 'Lys-9' as substrate. Also weakly methylates histone H1 (in vitro). H3 'Lys-9' trimethylation represents a specific tag for epigenetic transcriptional repression by recruiting HP1 (CBX1, CBX3 and/or CBX5) proteins to methylated histones. Mainly functions in heterochromatin regions, thereby playing a central role in the establishment of constitutive heterochromatin at pericentric and telomere regions. H3 'Lys-9' trimethylation is also required to direct DNA methylation at pericentric repeats. SUV39H1 is targeted to histone H3 via its interaction with RB1 and is involved in many processes, such as repression of MYOD1-stimulated differentiation, regulation of the control switch for exiting the cell cycle and entering differentiation, repression by the PML-RARA fusion protein, BMP-induced repression, repression of switch recombination to IgA and regulation of telomere length. Component of the eNoSC (energy-dependent nucleolar silencing) complex, a complex that mediates silencing of rDNA in response to intracellular energy status and acts by recruiting histone-modifying enzymes. The eNoSC complex is able to sense the energy status of cell: upon glucose starvation, elevation of NAD(+)/NADP(+) ratio activates SIRT1, leading to histone H3 deacetylation followed by dimethylation of H3 at 'Lys-9' (H3K9me2) by SUV39H1 and the formation of silent chromatin in the rDNA locus. Recruited by the large PER complex to the E-box elements of the circadian target genes such as PER2 itself or PER1, contributes to the conversion of local chromatin to a heterochromatin-like repressive state through H3 'Lys-9' trimethylation. (Microbial infection) Plays a role in defense against mycobacterial infections. Methylates M.tuberculosis HupB on 'Lys-140', probably methylates HupB of M.bovis also. Methylation has an inhibitory effect on mycobacterial growth in the host. Macrophages expressing about 60% SUV39H1 are slightly more susceptible to M.bovis or M.tuberculosis infection. Chaetocin (an inhibitor of this enzyme) increases macrophage survival of M.tuberculosis. This protein inhibits biofilm formation by M.tuberculosis via 'Lys-140' trimethylation. The sequence is that of Histone-lysine N-methyltransferase SUV39H1 (SUV39H1) from Homo sapiens (Human).